Reading from the N-terminus, the 295-residue chain is Bifunctional protein FolD (295 aa).

Residues 165–167, Ser190, and Ile231 each bind NADP(+); that span reads GRS.

This sequence belongs to the tetrahydrofolate dehydrogenase/cyclohydrolase family. As to quaternary structure, homodimer.

It catalyses the reaction (6R)-5,10-methylene-5,6,7,8-tetrahydrofolate + NADP(+) = (6R)-5,10-methenyltetrahydrofolate + NADPH. It carries out the reaction (6R)-5,10-methenyltetrahydrofolate + H2O = (6R)-10-formyltetrahydrofolate + H(+). The protein operates within one-carbon metabolism; tetrahydrofolate interconversion. Functionally, catalyzes the oxidation of 5,10-methylenetetrahydrofolate to 5,10-methenyltetrahydrofolate and then the hydrolysis of 5,10-methenyltetrahydrofolate to 10-formyltetrahydrofolate. The protein is Bifunctional protein FolD of Nitrosomonas eutropha (strain DSM 101675 / C91 / Nm57).